Reading from the N-terminus, the 415-residue chain is tRNA(Ile)-lysidine synthase (415 aa).

Position 36–41 (36–41 (SGGRDS)) interacts with ATP.

This sequence belongs to the tRNA(Ile)-lysidine synthase family.

It is found in the cytoplasm. It carries out the reaction cytidine(34) in tRNA(Ile2) + L-lysine + ATP = lysidine(34) in tRNA(Ile2) + AMP + diphosphate + H(+). Its function is as follows. Ligates lysine onto the cytidine present at position 34 of the AUA codon-specific tRNA(Ile) that contains the anticodon CAU, in an ATP-dependent manner. Cytidine is converted to lysidine, thus changing the amino acid specificity of the tRNA from methionine to isoleucine. The protein is tRNA(Ile)-lysidine synthase of Tropheryma whipplei (strain Twist) (Whipple's bacillus).